The sequence spans 96 residues: DNA-directed RNA polymerase subunit Rpo11 (96 aa).

Belongs to the archaeal Rpo11/eukaryotic RPB11/RPC19 RNA polymerase subunit family. In terms of assembly, part of the RNA polymerase complex.

It is found in the cytoplasm. It carries out the reaction RNA(n) + a ribonucleoside 5'-triphosphate = RNA(n+1) + diphosphate. Functionally, DNA-dependent RNA polymerase (RNAP) catalyzes the transcription of DNA into RNA using the four ribonucleoside triphosphates as substrates. The chain is DNA-directed RNA polymerase subunit Rpo11 from Nanoarchaeum equitans (strain Kin4-M).